The sequence spans 292 residues: Polyisoprenoid diphosphate/phosphate phosphohydrolase PLPP6 (292 aa).

Disordered regions lie at residues 1 to 34 (MPSP…SGGG) and 66 to 86 (GSFP…PPED). Topologically, residues 1–131 (MPSPRRTIEG…SAWGSVRPLM (131 aa)) are cytoplasmic. The segment covering 10-25 (GRPLGSSGGSSVPGSP) has biased composition (low complexity). 2 positions are modified to phosphoserine: Ser-24 and Ser-67. The segment covering 69 to 79 (PLAASGPAQAA) has biased composition (low complexity). Residues 132 to 152 (KLLEISGHGIPWLLGTLYCLL) traverse the membrane as a helical segment. Topologically, residues 153-161 (RSDSWAGRE) are lumenal. The chain crosses the membrane as a helical span at residues 162 to 182 (VLMNLLFALLLDLLLVAVIKG). The phosphatase sequence motif I stretch occupies residues 181–189 (KGLVRRRRP). Topologically, residues 183 to 225 (LVRRRRPAHNQKDMFFTLSVDRYSFPSGHATRAALVSRFILNH) are cytoplasmic. Positions 208–211 (PSGH) are phosphatase sequence motif II. Residue His-211 is the Proton donors of the active site. Residues 226-246 (LVLAIPLRVLVVLWAFVLGLS) traverse the membrane as a helical segment. The tract at residues 246-257 (SRVMLGRHNVTD) is phosphatase sequence motif III. At 247–257 (RVMLGRHNVTD) the chain is on the lumenal side. The active-site Nucleophile is the His-253. Residues 258–278 (VAFGFFLGYMQYSIVDYCWLS) form a helical membrane-spanning segment. Topologically, residues 279-292 (PHNVPVLFVLWNQQ) are cytoplasmic.

This sequence belongs to the PA-phosphatase related phosphoesterase family. Phosphorylation by PKC activates the phosphatase activity towards presqualene diphosphate.

Its subcellular location is the endoplasmic reticulum membrane. It localises to the nucleus envelope. The protein resides in the nucleus inner membrane. It carries out the reaction presqualene diphosphate + H2O = presqualene phosphate + phosphate + H(+). The catalysed reaction is presqualene phosphate + H2O = presqualene alcohol + phosphate. It catalyses the reaction (2E,6E)-farnesyl diphosphate + H2O = (2E,6E)-farnesyl phosphate + phosphate + H(+). The enzyme catalyses (2E,6E)-farnesyl phosphate + H2O = (2E,6E)-farnesol + phosphate. It carries out the reaction (2E,6E,10E)-geranylgeranyl diphosphate + H2O = (2E,6E,10E)-geranylgeranyl phosphate + phosphate + H(+). The catalysed reaction is (2E,6E,10E)-geranylgeranyl phosphate + H2O = (2E,6E,10E)-geranylgeraniol + phosphate. It catalyses the reaction (2E)-geranyl diphosphate + H2O = (2E)-geranyl phosphate + phosphate + H(+). The enzyme catalyses (2E)-geranyl phosphate + H2O = (2E)-geraniol + phosphate. It carries out the reaction 1,2-dihexadecanoyl-sn-glycero-3-phosphate + H2O = 1,2-dihexadecanoyl-sn-glycerol + phosphate. In terms of biological role, magnesium-independent polyisoprenoid diphosphatase that catalyzes the sequential dephosphorylation of presqualene, farnesyl, geranyl and geranylgeranyl diphosphates. Functions in the innate immune response through the dephosphorylation of presqualene diphosphate which acts as a potent inhibitor of the signaling pathways contributing to polymorphonuclear neutrophils activation. May regulate the biosynthesis of cholesterol and related sterols by dephosphorylating presqualene and farnesyl diphosphate, two key intermediates in this biosynthetic pathway. May also play a role in protein prenylation by acting on farnesyl diphosphate and its derivative geranylgeranyl diphosphate, two precursors for the addition of isoprenoid anchors to membrane proteins. Has a lower activity towards phosphatidic acid (PA), but through phosphatidic acid dephosphorylation may participate in the biosynthesis of phospholipids and triacylglycerols. May also act on ceramide-1-P, lysophosphatidic acid (LPA) and sphing-4-enine 1-phosphate/sphingosine-1-phosphate. The protein is Polyisoprenoid diphosphate/phosphate phosphohydrolase PLPP6 of Mus musculus (Mouse).